A 155-amino-acid polypeptide reads, in one-letter code: Ribosome maturation factor RimP (155 aa).

Belongs to the RimP family.

It is found in the cytoplasm. In terms of biological role, required for maturation of 30S ribosomal subunits. The chain is Ribosome maturation factor RimP from Parasynechococcus marenigrum (strain WH8102).